Reading from the N-terminus, the 235-residue chain is Purine nucleoside phosphorylase DeoD-type (235 aa).

H4 contacts a purine D-ribonucleoside. Phosphate is bound by residues G20, R24, R43, and 87–90 (RVGT). A purine D-ribonucleoside is bound by residues 179–181 (EME) and 203–204 (SD). Catalysis depends on D204, which acts as the Proton donor.

Belongs to the PNP/UDP phosphorylase family. In terms of assembly, homohexamer; trimer of homodimers.

It carries out the reaction a purine D-ribonucleoside + phosphate = a purine nucleobase + alpha-D-ribose 1-phosphate. The catalysed reaction is a purine 2'-deoxy-D-ribonucleoside + phosphate = a purine nucleobase + 2-deoxy-alpha-D-ribose 1-phosphate. Catalyzes the reversible phosphorolytic breakdown of the N-glycosidic bond in the beta-(deoxy)ribonucleoside molecules, with the formation of the corresponding free purine bases and pentose-1-phosphate. The polypeptide is Purine nucleoside phosphorylase DeoD-type (Clostridium perfringens (strain ATCC 13124 / DSM 756 / JCM 1290 / NCIMB 6125 / NCTC 8237 / Type A)).